Reading from the N-terminus, the 200-residue chain is Recombination protein RecR (200 aa).

The C4-type zinc finger occupies 57 to 72 (CRQCRTLTEDDLCPQC). A Toprim domain is found at 80–175 (TLLCVVEGPM…IASRIAHGVP (96 aa)).

It belongs to the RecR family.

Its function is as follows. May play a role in DNA repair. It seems to be involved in an RecBC-independent recombinational process of DNA repair. It may act with RecF and RecO. In Pseudomonas fluorescens (strain Pf0-1), this protein is Recombination protein RecR.